A 96-amino-acid chain; its full sequence is Protein RnfH (96 aa).

Belongs to the UPF0125 (RnfH) family.

The chain is Protein RnfH from Escherichia coli O127:H6 (strain E2348/69 / EPEC).